The sequence spans 573 residues: Potassium-transporting ATPase potassium-binding subunit (573 aa).

Helical transmembrane passes span 3-23 (AEGL…TPLL), 65-85 (GYTL…YALL), 136-156 (GLTV…VALI), 179-199 (LYVL…QGVP), 254-274 (LTNL…IYSF), 286-306 (ALWT…WWAE), 383-403 (AGLY…GLMV), 423-443 (VIAV…TTVV), 489-509 (GLGL…LAIA), and 531-551 (LFIT…FFPA).

The protein belongs to the KdpA family. In terms of assembly, the system is composed of three essential subunits: KdpA, KdpB and KdpC.

It localises to the cell inner membrane. Part of the high-affinity ATP-driven potassium transport (or Kdp) system, which catalyzes the hydrolysis of ATP coupled with the electrogenic transport of potassium into the cytoplasm. This subunit binds the periplasmic potassium ions and delivers the ions to the membrane domain of KdpB through an intramembrane tunnel. The protein is Potassium-transporting ATPase potassium-binding subunit of Rhodospirillum centenum (strain ATCC 51521 / SW).